Here is a 356-residue protein sequence, read N- to C-terminus: tRNA N6-adenosine threonylcarbamoyltransferase (356 aa).

Residues His-115 and His-119 each contribute to the Fe cation site. Residues 138–142 (LVSGG), Asp-171, Gly-184, and Asn-283 contribute to the substrate site. Asp-311 serves as a coordination point for Fe cation.

The protein belongs to the KAE1 / TsaD family. Fe(2+) is required as a cofactor.

The protein resides in the cytoplasm. The catalysed reaction is L-threonylcarbamoyladenylate + adenosine(37) in tRNA = N(6)-L-threonylcarbamoyladenosine(37) in tRNA + AMP + H(+). Required for the formation of a threonylcarbamoyl group on adenosine at position 37 (t(6)A37) in tRNAs that read codons beginning with adenine. Is involved in the transfer of the threonylcarbamoyl moiety of threonylcarbamoyl-AMP (TC-AMP) to the N6 group of A37, together with TsaE and TsaB. TsaD likely plays a direct catalytic role in this reaction. In Prochlorococcus marinus (strain NATL1A), this protein is tRNA N6-adenosine threonylcarbamoyltransferase.